An 892-amino-acid chain; its full sequence is MVKNKFIIILVVVAVILPFISSLINFYTDWLFFVETGFTSVFTTTLAAKVGAGLFFGVLLFIFAMINLHFSNRAKFPQTNIFVEGRNIYQVKRDEAARLAKPLGILASAILAILACKWGAMQWQNVLLFTNMVTVGTNDPILGKDIGFYLFSLPLLEMLKIFAGFTVLATTVLVGAVYYVRGGITLMERGAAIDVKVRKHLAVLIGIFSLTVAAGFYLNGCGLLLSGSSTFHGAGYADVNARLLTLRILTVLTPLAGAILAAGLWQGAWRLALLPPILVIAVYGIGIKAYPALLEKFKVAPNQLALETPYIENTIRFTRLGYDLDKIETIPFDADVKLTAADIANNDATIKNIRLWDHAPLLKTYSQLQQIRTYYKFFDVDNDRYLVNGQYTQVMLSPRELSYDDLPSRNWINERLIFTHGNGITFGPVSRISKEGLPEFFVKDIPAVSLADIKVTRPEIYYGELSNEYVIVKTKVPEFSYPTATGNINTTYGGKGGVPVGSMLNKALFAARFRTEKILLSSDIGSESRILYYRNINERVRAVAPFLRFDGDPYMVVADNGGLKWIIDAYTYSSRLPYSKPLKGGINYMRNSVKAVVDAYDGSLTFYISDPDDVMVKVYGRIFPELFKPMAAMPDDLRKHIRYPHQFLQLQAAMFAAYHMTDPKVFYNKENLWEIPSLGDKPMEPYYTIMKLPGEKKEEYLLLLPFTPSKRDNLAAWLTARCDAPNYGKILAYTFPRDRLIYGPKQIDARINQDSFISQQLTLWNQRGSEVIRGSMLVIPIEKSLLYVQPLFLAAADKAGLPELRRVIVAYGDEVVMEETLELALQRIFGGRKAPAGSTQPTPAAMKASSAELAREAMSIFERATNLQRQGDWAGYGEELKKLQQVLRRMAQ.

Transmembrane regions (helical) follow at residues 6-26 (FIIILVVVAVILPFISSLINF), 50-70 (VGAGLFFGVLLFIFAMINLHF), 103-123 (LGILASAILAILACKWGAMQW), 158-178 (MLKIFAGFTVLATTVLVGAVY), 201-221 (LAVLIGIFSLTVAAGFYLNGC), 248-268 (ILTVLTPLAGAILAAGLWQGA), and 271-291 (LALLPPILVIAVYGIGIKAYP).

The protein belongs to the UPF0182 family.

It is found in the cell membrane. The sequence is that of UPF0182 protein Gura_0902 from Geotalea uraniireducens (strain Rf4) (Geobacter uraniireducens).